The following is a 502-amino-acid chain: Probable malate:quinone oxidoreductase (502 aa).

It belongs to the MQO family. It depends on FAD as a cofactor.

It catalyses the reaction (S)-malate + a quinone = a quinol + oxaloacetate. The protein operates within carbohydrate metabolism; tricarboxylic acid cycle; oxaloacetate from (S)-malate (quinone route): step 1/1. The chain is Probable malate:quinone oxidoreductase from Synechococcus sp. (strain CC9902).